The chain runs to 314 residues: GTP cyclohydrolase FolE2 (314 aa).

The tract at residues 290-314 (DASAWSAPQAAAPDQQESFATGNER) is disordered. The segment covering 291–304 (ASAWSAPQAAAPDQ) has biased composition (low complexity). Positions 305–314 (QESFATGNER) are enriched in polar residues.

The protein belongs to the GTP cyclohydrolase IV family.

The catalysed reaction is GTP + H2O = 7,8-dihydroneopterin 3'-triphosphate + formate + H(+). It functions in the pathway cofactor biosynthesis; 7,8-dihydroneopterin triphosphate biosynthesis; 7,8-dihydroneopterin triphosphate from GTP: step 1/1. Functionally, converts GTP to 7,8-dihydroneopterin triphosphate. This Pseudomonas putida (strain ATCC 47054 / DSM 6125 / CFBP 8728 / NCIMB 11950 / KT2440) protein is GTP cyclohydrolase FolE2.